Here is a 111-residue protein sequence, read N- to C-terminus: ATP synthase subunit c (111 aa).

Helical transmembrane passes span 38 to 58 (GLGV…GSGL) and 89 to 109 (AGIA…LIFV).

The protein belongs to the ATPase C chain family. As to quaternary structure, F-type ATPases have 2 components, F(1) - the catalytic core - and F(0) - the membrane proton channel. F(1) has five subunits: alpha(3), beta(3), gamma(1), delta(1), epsilon(1). F(0) has three main subunits: a(1), b(2) and c(10-14). The alpha and beta chains form an alternating ring which encloses part of the gamma chain. F(1) is attached to F(0) by a central stalk formed by the gamma and epsilon chains, while a peripheral stalk is formed by the delta and b chains.

The protein localises to the cell membrane. F(1)F(0) ATP synthase produces ATP from ADP in the presence of a proton or sodium gradient. F-type ATPases consist of two structural domains, F(1) containing the extramembraneous catalytic core and F(0) containing the membrane proton channel, linked together by a central stalk and a peripheral stalk. During catalysis, ATP synthesis in the catalytic domain of F(1) is coupled via a rotary mechanism of the central stalk subunits to proton translocation. Its function is as follows. Key component of the F(0) channel; it plays a direct role in translocation across the membrane. A homomeric c-ring of between 10-14 subunits forms the central stalk rotor element with the F(1) delta and epsilon subunits. This is ATP synthase subunit c from Mycoplasmopsis synoviae (strain 53) (Mycoplasma synoviae).